The chain runs to 70 residues: Brevinin-1PLc (70 aa).

The signal sequence occupies residues 1–22; it reads MFTLKKSMLLLFFLGTINLSLC. Residues 23 to 44 constitute a propeptide that is removed on maturation; that stretch reads EEERNAEEERRDEPDEMDVEVE. Cys64 and Cys70 are oxidised to a cystine.

As to expression, expressed by the skin glands.

It is found in the secreted. Functionally, antimicrobial activity against the Gram-negative bacterium E.coli, the Gram-positive bacterium S.aureus and the yeast C.albicans. The chain is Brevinin-1PLc from Lithobates palustris (Pickerel frog).